An 841-amino-acid polypeptide reads, in one-letter code: DNA ligase (841 aa).

Residues aspartate 33–aspartate 37, serine 82–leucine 83, and glutamate 114 each bind NAD(+). The N6-AMP-lysine intermediate role is filled by lysine 116. Residues arginine 137, glutamate 174, lysine 300, and lysine 324 each coordinate NAD(+). Zn(2+) is bound by residues cysteine 418, cysteine 421, cysteine 436, and cysteine 442. The region spanning glutamate 758 to arginine 841 is the BRCT domain.

Belongs to the NAD-dependent DNA ligase family. LigA subfamily. Mg(2+) is required as a cofactor. Requires Mn(2+) as cofactor.

The enzyme catalyses NAD(+) + (deoxyribonucleotide)n-3'-hydroxyl + 5'-phospho-(deoxyribonucleotide)m = (deoxyribonucleotide)n+m + AMP + beta-nicotinamide D-nucleotide.. Its function is as follows. DNA ligase that catalyzes the formation of phosphodiester linkages between 5'-phosphoryl and 3'-hydroxyl groups in double-stranded DNA using NAD as a coenzyme and as the energy source for the reaction. It is essential for DNA replication and repair of damaged DNA. The protein is DNA ligase of Xanthomonas oryzae pv. oryzae (strain KACC10331 / KXO85).